The following is a 447-amino-acid chain: NADH-ubiquinone oxidoreductase chain 4 (447 aa).

Helical transmembrane passes span 4–24 (LLLL…FMLF), 34–54 (LIIG…LNWI), 67–87 (MYSY…FISL), 100–120 (LLMI…FYLF), 149–169 (MFYT…IYLI), 189–209 (LFIY…FHGW), 223–243 (MILA…LMII), 248–268 (FILI…ILSL), 279–299 (IIAI…MTFL), 304–324 (IGGY…FFLV), 349–371 (MSLL…NLIS), 388–408 (LILM…FMFI), and 422–442 (GILV…LMFL).

This sequence belongs to the complex I subunit 4 family.

The protein localises to the mitochondrion membrane. It catalyses the reaction a ubiquinone + NADH + 5 H(+)(in) = a ubiquinol + NAD(+) + 4 H(+)(out). Core subunit of the mitochondrial membrane respiratory chain NADH dehydrogenase (Complex I) that is believed to belong to the minimal assembly required for catalysis. Complex I functions in the transfer of electrons from NADH to the respiratory chain. The immediate electron acceptor for the enzyme is believed to be ubiquinone. The polypeptide is NADH-ubiquinone oxidoreductase chain 4 (ND4) (Apis mellifera ligustica (Common honeybee)).